We begin with the raw amino-acid sequence, 110 residues long: Holo-[acyl-carrier-protein] synthase (110 aa).

Mg(2+) contacts are provided by D8 and E54.

It belongs to the P-Pant transferase superfamily. AcpS family. Mg(2+) serves as cofactor.

It is found in the cytoplasm. It catalyses the reaction apo-[ACP] + CoA = holo-[ACP] + adenosine 3',5'-bisphosphate + H(+). Its function is as follows. Transfers the 4'-phosphopantetheine moiety from coenzyme A to a Ser of acyl-carrier-protein. The sequence is that of Holo-[acyl-carrier-protein] synthase from Mycoplasma capricolum subsp. capricolum (strain California kid / ATCC 27343 / NCTC 10154).